The sequence spans 328 residues: Probable fused nickel transport protein LarMN (328 aa).

8 consecutive transmembrane segments (helical) span residues 8–28, 42–62, 75–95, 103–123, 138–158, 187–207, 229–249, and 296–316; these read LSPATCGTLVTAMAPVWTVAV, LPMLGIAASLAFLIMMFNLPI, LLAVLIGPWAACLALTVTLLL, GGILAFGANALNMAVIMPFVG, LGLAIGAYLGINMAALVAGIE, MLTAHLLVAGWVEVVFTLLVF, PWIALLLGLAVLSPLGLLASN, and PVSVGYILSAITAVLIFLLLI.

The protein belongs to the CbiM family. NikM subfamily. In terms of assembly, may form an energy-coupling factor (ECF) transporter complex composed of an ATP-binding protein (A component, LarO), a transmembrane protein (T component, LarQ) and a fused possible substrate-capture protein (S component, LarMN) of unknown stoichiometry.

Its subcellular location is the cell membrane. Its function is as follows. Probably part of the energy-coupling factor (ECF) transporter complex LarMNQO involved in nickel import. This chain is Probable fused nickel transport protein LarMN, found in Lactiplantibacillus plantarum (strain ATCC BAA-793 / NCIMB 8826 / WCFS1) (Lactobacillus plantarum).